The sequence spans 421 residues: Serine--tRNA ligase (421 aa).

229-231 (TSE) provides a ligand contact to L-serine. 260–262 (RRE) lines the ATP pocket. Glu-283 contributes to the L-serine binding site. 347–350 (EISS) lines the ATP pocket. Ser-381 provides a ligand contact to L-serine.

Belongs to the class-II aminoacyl-tRNA synthetase family. Type-1 seryl-tRNA synthetase subfamily. As to quaternary structure, homodimer. The tRNA molecule binds across the dimer.

It localises to the cytoplasm. It carries out the reaction tRNA(Ser) + L-serine + ATP = L-seryl-tRNA(Ser) + AMP + diphosphate + H(+). The catalysed reaction is tRNA(Sec) + L-serine + ATP = L-seryl-tRNA(Sec) + AMP + diphosphate + H(+). It functions in the pathway aminoacyl-tRNA biosynthesis; selenocysteinyl-tRNA(Sec) biosynthesis; L-seryl-tRNA(Sec) from L-serine and tRNA(Sec): step 1/1. Its function is as follows. Catalyzes the attachment of serine to tRNA(Ser). Is also able to aminoacylate tRNA(Sec) with serine, to form the misacylated tRNA L-seryl-tRNA(Sec), which will be further converted into selenocysteinyl-tRNA(Sec). The polypeptide is Serine--tRNA ligase (Fusobacterium nucleatum subsp. nucleatum (strain ATCC 25586 / DSM 15643 / BCRC 10681 / CIP 101130 / JCM 8532 / KCTC 2640 / LMG 13131 / VPI 4355)).